Reading from the N-terminus, the 410-residue chain is Cysteine desulfurase IscS (410 aa).

Pyridoxal 5'-phosphate-binding positions include 80–81, N160, Q188, and 208–210; these read AT and SGH. K211 carries the N6-(pyridoxal phosphate)lysine modification. Residue T248 coordinates pyridoxal 5'-phosphate. Residue C334 is the Cysteine persulfide intermediate of the active site. Residue C334 participates in [2Fe-2S] cluster binding.

This sequence belongs to the class-V pyridoxal-phosphate-dependent aminotransferase family. NifS/IscS subfamily. As to quaternary structure, homodimer. Forms a heterotetramer with IscU, interacts with other sulfur acceptors. The cofactor is pyridoxal 5'-phosphate.

It is found in the cytoplasm. The catalysed reaction is (sulfur carrier)-H + L-cysteine = (sulfur carrier)-SH + L-alanine. Its pathway is cofactor biosynthesis; iron-sulfur cluster biosynthesis. In terms of biological role, master enzyme that delivers sulfur to a number of partners involved in Fe-S cluster assembly, tRNA modification or cofactor biosynthesis. Catalyzes the removal of elemental sulfur atoms from cysteine to produce alanine. Functions as a sulfur delivery protein for Fe-S cluster synthesis onto IscU, an Fe-S scaffold assembly protein, as well as other S acceptor proteins. The polypeptide is Cysteine desulfurase IscS (Rickettsia africae (strain ESF-5)).